Reading from the N-terminus, the 62-residue chain is Photosystem II reaction center protein Z (62 aa).

The next 2 membrane-spanning stretches (helical) occupy residues 8–28 and 41–61; these read AVFA…VVFS and FSGT…NSLI.

It belongs to the PsbZ family. As to quaternary structure, PSII is composed of 1 copy each of membrane proteins PsbA, PsbB, PsbC, PsbD, PsbE, PsbF, PsbH, PsbI, PsbJ, PsbK, PsbL, PsbM, PsbT, PsbY, PsbZ, Psb30/Ycf12, at least 3 peripheral proteins of the oxygen-evolving complex and a large number of cofactors. It forms dimeric complexes.

The protein localises to the plastid. The protein resides in the chloroplast thylakoid membrane. Functionally, may control the interaction of photosystem II (PSII) cores with the light-harvesting antenna, regulates electron flow through the 2 photosystem reaction centers. PSII is a light-driven water plastoquinone oxidoreductase, using light energy to abstract electrons from H(2)O, generating a proton gradient subsequently used for ATP formation. In Populus alba (White poplar), this protein is Photosystem II reaction center protein Z.